The primary structure comprises 131 residues: Acanthoscurrin-2 (131 aa).

K130 is subject to Lysine amide.

As to expression, expressed in hemocytes and secreted into the plasma following bacterial immune challenge.

The protein localises to the secreted. Antimicrobial protein. Strong activity against the Gram-negative bacterium E.coli SBS363 and yeast C.albicans. No detectable activity against the Gram-positive bacterium M.luteus. This chain is Acanthoscurrin-2, found in Acanthoscurria gomesiana (Tarantula spider).